We begin with the raw amino-acid sequence, 515 residues long: MDEFHRCGKEDSFWQQCFLYPLFFQEDLYAISHDHYLDVSSSSRPMEHLSSNDQLSFLTVKRLIGQIRQQNHSIVLFVNCDPNPLADRKKSFYSESVLEALTLVLEVPFSIWSKYSVEGMNESKSFRSIHSIFPFLEDKFPHSNSILDARIPYSIHPEILVRTFRRWIRDAPSLHPLRSVLYEYRNSPDNLQRSIIVVPRVNTRFFLFLWNYYVCECESILFSRLKRSSHSRSLSHGSFPQRTHFHRKIKHIIIFSRRNSLKSIWSLKDPKIHYVRYGERPIIAIKGAHLLVKKCRYYLLIFRQFYFHLWSEPYRVCSHQLSKNCSSSPGYFLRVRMNPILVRTKMLDELFIADLITDEIDPIVPIVPIIGLLATEKFCDISGRPISKLSWTSLTDDDILDRFDQIWRNLFHYYSGSFDRDGLYRIKYILSLSCAKTLACKHKSTIRVVRKELGPELFKKSFSKEREFYSLRFSSKAAARSQRERIWHSDIPQINPLANSWQKIQDLKIENLFDQ.

Belongs to the intron maturase 2 family. MatK subfamily.

It is found in the plastid. It localises to the chloroplast. Usually encoded in the trnK tRNA gene intron. Probably assists in splicing its own and other chloroplast group II introns. This Pinus coulteri (Coulter pine) protein is Maturase K.